Consider the following 225-residue polypeptide: PKHD-type hydroxylase HEAR3399 (225 aa).

Positions 77-177 (RYMPPLFNRY…RVCSFFWLQS (101 aa)) constitute a Fe2OG dioxygenase domain. Residues His95, Asp97, and His158 each contribute to the Fe cation site. Arg168 contacts 2-oxoglutarate.

Requires Fe(2+) as cofactor. L-ascorbate serves as cofactor.

The chain is PKHD-type hydroxylase HEAR3399 from Herminiimonas arsenicoxydans.